The sequence spans 360 residues: MLVYLAEYLTRFHTGFNVFSYVTFRAILGLLTALMFSLWWGPKLIERLQLMQIGQVVRNDGPESHFSKRGTPTMGGLLILGAIFLSVLLWGDLGSRYVWVMLFVLGSFGMIGFIDDYRKVVRKDTKGLIARWKYILQSLAALIIAFFLYTTAANPGETQLVVPFFKDVMPQLGAVFIVLAYFTIVGSSNAVNLTDGLDGLAIMPTVMVAAAFALIAYLSGHAQFANYLHIPHLPGSGELVIVCTAIVGAGLGFLWFNTYPAQVFMGDVGSLSLGAALGAIAVLVRQEILLVIMGGVFVMETVSVILQVGSYKLRGQRIFRMAPIHHHYELKGWPEPRVIVRFWIISIFLVLLGLATLKLR.

A run of 10 helical transmembrane segments spans residues 26 to 46, 74 to 94, 97 to 117, 134 to 154, 168 to 188, 199 to 219, 236 to 256, 263 to 283, 288 to 308, and 338 to 358; these read AILGLLTALMFSLWWGPKLIE, MGGLLILGAIFLSVLLWGDLG, YVWVMLFVLGSFGMIGFIDDY, YILQSLAALIIAFFLYTTAAN, VMPQLGAVFIVLAYFTIVGSS, GLAIMPTVMVAAAFALIAYLS, SGELVIVCTAIVGAGLGFLWF, VFMGDVGSLSLGAALGAIAVL, ILLVIMGGVFVMETVSVILQV, and VIVRFWIISIFLVLLGLATLK.

It belongs to the glycosyltransferase 4 family. MraY subfamily. Requires Mg(2+) as cofactor.

It localises to the cell inner membrane. It catalyses the reaction UDP-N-acetyl-alpha-D-muramoyl-L-alanyl-gamma-D-glutamyl-meso-2,6-diaminopimeloyl-D-alanyl-D-alanine + di-trans,octa-cis-undecaprenyl phosphate = di-trans,octa-cis-undecaprenyl diphospho-N-acetyl-alpha-D-muramoyl-L-alanyl-D-glutamyl-meso-2,6-diaminopimeloyl-D-alanyl-D-alanine + UMP. It functions in the pathway cell wall biogenesis; peptidoglycan biosynthesis. In terms of biological role, catalyzes the initial step of the lipid cycle reactions in the biosynthesis of the cell wall peptidoglycan: transfers peptidoglycan precursor phospho-MurNAc-pentapeptide from UDP-MurNAc-pentapeptide onto the lipid carrier undecaprenyl phosphate, yielding undecaprenyl-pyrophosphoryl-MurNAc-pentapeptide, known as lipid I. The protein is Phospho-N-acetylmuramoyl-pentapeptide-transferase of Shewanella oneidensis (strain ATCC 700550 / JCM 31522 / CIP 106686 / LMG 19005 / NCIMB 14063 / MR-1).